A 194-amino-acid polypeptide reads, in one-letter code: Large ribosomal subunit protein bL17 (194 aa).

Residues 126–194 (AEPKQTKART…SPEQTNKQEE (69 aa)) form a disordered region. Positions 131–140 (TKARTRRGKG) are enriched in basic residues. Composition is skewed to polar residues over residues 144–161 (ATTT…QDMA) and 181–194 (LDTQ…KQEE).

The protein belongs to the bacterial ribosomal protein bL17 family. In terms of assembly, part of the 50S ribosomal subunit. Contacts protein L32.

The polypeptide is Large ribosomal subunit protein bL17 (Amoebophilus asiaticus (strain 5a2)).